Reading from the N-terminus, the 575-residue chain is DNA-directed RNA polymerase subunit beta' (575 aa).

It belongs to the RNA polymerase beta' chain family. As to quaternary structure, in plastids the minimal PEP RNA polymerase catalytic core is composed of four subunits: alpha, beta, beta', and beta''. When a (nuclear-encoded) sigma factor is associated with the core the holoenzyme is formed, which can initiate transcription.

It localises to the plastid. The protein localises to the apicoplast. The enzyme catalyses RNA(n) + a ribonucleoside 5'-triphosphate = RNA(n+1) + diphosphate. Its function is as follows. DNA-dependent RNA polymerase catalyzes the transcription of DNA into RNA using the four ribonucleoside triphosphates as substrates. This chain is DNA-directed RNA polymerase subunit beta' (rpoC1), found in Plasmodium falciparum (isolate 3D7).